A 340-amino-acid polypeptide reads, in one-letter code: Glycerol-3-phosphate dehydrogenase [NAD(P)+] (340 aa).

Residues Ser-13, Trp-14, and Lys-108 each coordinate NADPH. 3 residues coordinate sn-glycerol 3-phosphate: Lys-108, Gly-139, and Ser-141. Ala-143 contributes to the NADPH binding site. Sn-glycerol 3-phosphate is bound by residues Lys-194, Asp-247, Ser-257, Arg-258, and Asn-259. Lys-194 serves as the catalytic Proton acceptor. Arg-258 provides a ligand contact to NADPH. Residues Val-282 and Glu-284 each coordinate NADPH.

Belongs to the NAD-dependent glycerol-3-phosphate dehydrogenase family.

The protein localises to the cytoplasm. The enzyme catalyses sn-glycerol 3-phosphate + NAD(+) = dihydroxyacetone phosphate + NADH + H(+). It catalyses the reaction sn-glycerol 3-phosphate + NADP(+) = dihydroxyacetone phosphate + NADPH + H(+). Its pathway is membrane lipid metabolism; glycerophospholipid metabolism. Functionally, catalyzes the reduction of the glycolytic intermediate dihydroxyacetone phosphate (DHAP) to sn-glycerol 3-phosphate (G3P), the key precursor for phospholipid synthesis. This chain is Glycerol-3-phosphate dehydrogenase [NAD(P)+], found in Streptococcus sanguinis (strain SK36).